The chain runs to 192 residues: Probable apo-citrate lyase phosphoribosyl-dephospho-CoA transferase (192 aa).

This sequence belongs to the CitX family.

It catalyses the reaction apo-[citrate lyase ACP] + 2'-(5''-triphospho-alpha-D-ribosyl)-3'-dephospho-CoA = holo-[citrate lyase ACP] + diphosphate. Transfers 2-(5''-triphosphoribosyl)-3'-dephosphocoenzyme-A on a serine residue to the apo-acyl carrier protein (gamma chain) of the citrate lyase to yield holo-acyl carrier protein. This is Probable apo-citrate lyase phosphoribosyl-dephospho-CoA transferase from Streptococcus pyogenes serotype M18 (strain MGAS8232).